The primary structure comprises 146 residues: Anti-sigma F factor (146 aa).

This sequence belongs to the anti-sigma-factor family.

The catalysed reaction is L-seryl-[protein] + ATP = O-phospho-L-seryl-[protein] + ADP + H(+). It carries out the reaction L-threonyl-[protein] + ATP = O-phospho-L-threonyl-[protein] + ADP + H(+). In terms of biological role, binds to sigma F and blocks its ability to form an RNA polymerase holoenzyme (E-sigma F). Phosphorylates SpoIIAA on a serine residue. This phosphorylation may enable SpoIIAA to act as an anti-anti-sigma factor that counteracts SpoIIAB and thus releases sigma F from inhibition. In Bacillus anthracis (strain A0248), this protein is Anti-sigma F factor.